A 285-amino-acid polypeptide reads, in one-letter code: Pantothenate synthetase (285 aa).

30-37 provides a ligand contact to ATP; that stretch reads MGNLHQGH. Catalysis depends on histidine 37, which acts as the Proton donor. Glutamine 61 provides a ligand contact to (R)-pantoate. Residue glutamine 61 participates in beta-alanine binding. 149-152 is an ATP binding site; it reads GQKD. Glutamine 155 is a (R)-pantoate binding site. ATP contacts are provided by residues valine 178 and 186–189; that span reads LSSR.

It belongs to the pantothenate synthetase family. Homodimer.

Its subcellular location is the cytoplasm. The enzyme catalyses (R)-pantoate + beta-alanine + ATP = (R)-pantothenate + AMP + diphosphate + H(+). It participates in cofactor biosynthesis; (R)-pantothenate biosynthesis; (R)-pantothenate from (R)-pantoate and beta-alanine: step 1/1. Its function is as follows. Catalyzes the condensation of pantoate with beta-alanine in an ATP-dependent reaction via a pantoyl-adenylate intermediate. The polypeptide is Pantothenate synthetase (Aeromonas hydrophila subsp. hydrophila (strain ATCC 7966 / DSM 30187 / BCRC 13018 / CCUG 14551 / JCM 1027 / KCTC 2358 / NCIMB 9240 / NCTC 8049)).